A 157-amino-acid polypeptide reads, in one-letter code: Transcription elongation factor GreA (157 aa).

Positions 25 to 43 (EGRAKVAEQLSEARDKGDL) are enriched in basic and acidic residues. The segment at 25–47 (EGRAKVAEQLSEARDKGDLSENA) is disordered. Residues 43–79 (LSENAEYDAAKEAQEILERRIAKLEELMINARVINKD) adopt a coiled-coil conformation.

The protein belongs to the GreA/GreB family.

Necessary for efficient RNA polymerase transcription elongation past template-encoded arresting sites. The arresting sites in DNA have the property of trapping a certain fraction of elongating RNA polymerases that pass through, resulting in locked ternary complexes. Cleavage of the nascent transcript by cleavage factors such as GreA or GreB allows the resumption of elongation from the new 3'terminus. GreA releases sequences of 2 to 3 nucleotides. This is Transcription elongation factor GreA from Amoebophilus asiaticus (strain 5a2).